Consider the following 1404-residue polypeptide: G8 domain-containing protein DDB_G0286897 (1404 aa).

The signal sequence occupies residues 1-20 (MNYFKYFIFVVFLFFTIVKC). 2 helical membrane-spanning segments follow: residues 97 to 117 (LVGF…GLFA) and 128 to 148 (IIIL…IQSI). 11 N-linked (GlcNAc...) asparagine glycosylation sites follow: Asn352, Asn365, Asn413, Asn481, Asn639, Asn838, Asn979, Asn1003, Asn1017, Asn1253, and Asn1334. Residues 553 to 679 (STWASGFVPL…YHNTWTKLST (127 aa)) enclose the G8 domain.

Belongs to the comF family.

The protein localises to the membrane. In Dictyostelium discoideum (Social amoeba), this protein is G8 domain-containing protein DDB_G0286897.